A 244-amino-acid polypeptide reads, in one-letter code: Small ribosomal subunit protein uS3 (244 aa).

The KH type-2 domain maps to 39-107 (MRKFVMSELK…ETHLNIVEVR (69 aa)). The segment at 214-244 (ASERRALEGDAQGPASRERDRGDRRRERDNA) is disordered. The span at 229–244 (SRERDRGDRRRERDNA) shows a compositional bias: basic and acidic residues.

It belongs to the universal ribosomal protein uS3 family. As to quaternary structure, part of the 30S ribosomal subunit. Forms a tight complex with proteins S10 and S14.

Functionally, binds the lower part of the 30S subunit head. Binds mRNA in the 70S ribosome, positioning it for translation. This is Small ribosomal subunit protein uS3 from Rhizobium etli (strain CIAT 652).